Reading from the N-terminus, the 170-residue chain is Archaemetzincin (170 aa).

His110 contributes to the Zn(2+) binding site. Glu111 acts as the Proton acceptor in catalysis. Zn(2+)-binding residues include His114, His120, Cys121, Cys125, Cys144, and Cys147.

It belongs to the peptidase M54 family. In terms of assembly, monomer. Requires Zn(2+) as cofactor.

In terms of biological role, probable zinc metalloprotease whose natural substrate is unknown. In Nanoarchaeum equitans (strain Kin4-M), this protein is Archaemetzincin.